Reading from the N-terminus, the 521-residue chain is Matrix metalloproteinase-A (521 aa).

An N-terminal signal peptide occupies residues 1–21; that stretch reads MFTGLHDILIILFLLVTLKIA. The propeptide at 22–95 is activation peptide; sequence QNVDHTKFLQ…EDHQKSRGKR (74 aa). The Cysteine switch signature appears at 78-85; it reads PRCGHPDV. Cys-80 serves as a coordination point for Zn(2+). The Extracellular portion of the chain corresponds to 96–500; sequence YAPPQFKWKE…FCPRNEKLVL (405 aa). An N-linked (GlcNAc...) asparagine glycan is attached at Asn-199. His-215 contacts Zn(2+). The active site involves Glu-216. Zn(2+)-binding residues include His-219 and His-225. Positions 259 to 298 are disordered; it reads KASKKENEEEERKTENEDKRRKTEKDRGRTREHESDDIRP. Residues 261 to 298 show a composition bias toward basic and acidic residues; that stretch reads SKKENEEEERKTENEDKRRKTEKDRGRTREHESDDIRP. 3 Hemopexin repeats span residues 300 to 347, 391 to 443, and 444 to 492; these read ECRV…FPGL, EKYV…WARV, and PKGV…FGFC. A glycan (N-linked (GlcNAc...) asparagine) is linked at Asn-469. A helical transmembrane segment spans residues 501–521; it reads NSSSSHFSLIYATITILILIF.

Belongs to the peptidase M10A family. It depends on Zn(2+) as a cofactor. In terms of tissue distribution, expressed in the anchor cell. Expressed in the anchor cell throughout the L3 and the early L4 stage, but not in vulva precursor cells P6.p, P6.px, or P6.pxx. Expression in P6.pxxx cells begins in late-L4 stage. During L4 lethargus, expressed in all four vulE cells, but not in vulF cells. The expression in vulE cells persists in adulthood. In males, expressed in the linker cell (LC) from the early L4 stage until LC death during the L4-to-adult molt.

It is found in the cell membrane. Its subcellular location is the basolateral cell membrane. In terms of biological role, metalloprotease which, together with cadherin cdh-3 and hemicentin him-4, plays a role in anchor cell (AC) invasion during postembryonic vulval development probably by promoting the degradation of the basement membrane separating the gonad from the vulva epithelium. The polypeptide is Matrix metalloproteinase-A (Caenorhabditis elegans).